A 62-amino-acid chain; its full sequence is Potassium channel toxin alpha-KTx 22.1 (62 aa).

The N-terminal stretch at 1–18 (MQKLFIVFVLFCILRLDA) is a signal peptide. 3 disulfides stabilise this stretch: Cys-28–Cys-46, Cys-33–Cys-59, and Cys-37–Cys-61.

Belongs to the short scorpion toxin superfamily. Potassium channel inhibitor family. Alpha-KTx 22 subfamily. Expressed by the venom gland.

Its subcellular location is the secreted. Its function is as follows. May block potassium channels. This Olivierus martensii (Manchurian scorpion) protein is Potassium channel toxin alpha-KTx 22.1.